A 1153-amino-acid chain; its full sequence is Protein unc-13 homolog 4B (1153 aa).

The interval 54 to 84 (VLKSSLAPLEENGSGGEEDSDESPDGTLQLS) is disordered. Residues 162–288 (ATHEEIYEAA…MKEIAVTASS (127 aa)) form the C2 1 domain. Ca(2+) contacts are provided by D195, D201, D252, F253, and D254. In terms of domain architecture, MHD1 spans 637–755 (FEVYLILKRY…RCCIFYAQQM (119 aa)). Residues 869-975 (SNSMDQLMMY…LETSDLIHQY (107 aa)) form the MHD2 domain. One can recognise a C2 2 domain in the interval 990–1114 (PYGQLTITAQ…EATPPGEQIM (125 aa)). 4 residues coordinate Ca(2+): D1019, D1025, D1083, and D1085.

It belongs to the unc-13 family. In terms of assembly, interacts with Cam. Requires Ca(2+) as cofactor.

It localises to the cytoplasm. It is found in the cytoskeleton. The protein resides in the cell projection. The protein localises to the filopodium. Its subcellular location is the late endosome. It localises to the lysosome. Its function is as follows. Essential for tracheal development in embryos. Functions with the GTPase Rab39 and downstream of dnd, to regulate lumen fusion between previously separate tracheal branches (anastomosis). Essential component of secretory lysosome-related organelles (SLs) that are present in the tracheal fusion tip cells (FCs). Mediates intracellular fusion of the extending tracheal stalk cell lumen in the FCs by recruiting the SNARE complex component Syx1A to the SLs, this may then enable the SLs to interact with complementary SNAREs (such as Syb) present in the apical membrane of the FC-FC interface and the membranes of the separate tracheal stalk cells. May also function in the maturation and exocytosis of the SLs. The polypeptide is Protein unc-13 homolog 4B (Drosophila melanogaster (Fruit fly)).